Reading from the N-terminus, the 153-residue chain is Small heat shock protein ibp (153 aa).

In terms of domain architecture, sHSP spans 35 to 153 (KIISDSVPPY…KIQKIQINVK (119 aa)).

It belongs to the small heat shock protein (HSP20) family.

This chain is Small heat shock protein ibp (ibp), found in Buchnera aphidicola subsp. Thelaxes suberi.